Reading from the N-terminus, the 1058-residue chain is Carbamoyl phosphate synthase large chain (1058 aa).

The carboxyphosphate synthetic domain stretch occupies residues methionine 1–glutamate 401. Arginine 129, arginine 169, glycine 175, glycine 176, arginine 208, isoleucine 210, glutamate 215, glycine 241, isoleucine 242, histidine 243, glutamine 284, and glutamate 298 together coordinate ATP. In terms of domain architecture, ATP-grasp 1 spans lysine 133–valine 327. Mg(2+)-binding residues include glutamine 284, glutamate 298, and asparagine 300. Glutamine 284, glutamate 298, and asparagine 300 together coordinate Mn(2+). The segment at isoleucine 402–serine 546 is oligomerization domain. The segment at valine 547–asparagine 929 is carbamoyl phosphate synthetic domain. Residues glutamate 671–leucine 861 form the ATP-grasp 2 domain. 10 residues coordinate ATP: arginine 707, serine 746, isoleucine 748, glutamate 752, glycine 777, valine 778, histidine 779, serine 780, glutamine 820, and glutamate 832. Residues glutamine 820, glutamate 832, and asparagine 834 each coordinate Mg(2+). 3 residues coordinate Mn(2+): glutamine 820, glutamate 832, and asparagine 834. An MGS-like domain is found at serine 930–isoleucine 1058. The tract at residues serine 930 to isoleucine 1058 is allosteric domain.

It belongs to the CarB family. Composed of two chains; the small (or glutamine) chain promotes the hydrolysis of glutamine to ammonia, which is used by the large (or ammonia) chain to synthesize carbamoyl phosphate. Tetramer of heterodimers (alpha,beta)4. It depends on Mg(2+) as a cofactor. Mn(2+) is required as a cofactor.

The enzyme catalyses hydrogencarbonate + L-glutamine + 2 ATP + H2O = carbamoyl phosphate + L-glutamate + 2 ADP + phosphate + 2 H(+). It carries out the reaction hydrogencarbonate + NH4(+) + 2 ATP = carbamoyl phosphate + 2 ADP + phosphate + 2 H(+). The protein operates within amino-acid biosynthesis; L-arginine biosynthesis; carbamoyl phosphate from bicarbonate: step 1/1. It participates in pyrimidine metabolism; UMP biosynthesis via de novo pathway; (S)-dihydroorotate from bicarbonate: step 1/3. Functionally, large subunit of the glutamine-dependent carbamoyl phosphate synthetase (CPSase). CPSase catalyzes the formation of carbamoyl phosphate from the ammonia moiety of glutamine, carbonate, and phosphate donated by ATP, constituting the first step of 2 biosynthetic pathways, one leading to arginine and/or urea and the other to pyrimidine nucleotides. The large subunit (synthetase) binds the substrates ammonia (free or transferred from glutamine from the small subunit), hydrogencarbonate and ATP and carries out an ATP-coupled ligase reaction, activating hydrogencarbonate by forming carboxy phosphate which reacts with ammonia to form carbamoyl phosphate. This is Carbamoyl phosphate synthase large chain from Streptococcus pyogenes serotype M5 (strain Manfredo).